Consider the following 127-residue polypeptide: Aspartate 1-decarboxylase (127 aa).

Serine 25 acts as the Schiff-base intermediate with substrate; via pyruvic acid in catalysis. Pyruvic acid (Ser) is present on serine 25. Threonine 57 serves as a coordination point for substrate. The Proton donor role is filled by tyrosine 58. 73 to 75 (GAA) is a binding site for substrate.

It belongs to the PanD family. As to quaternary structure, heterooctamer of four alpha and four beta subunits. It depends on pyruvate as a cofactor. In terms of processing, is synthesized initially as an inactive proenzyme, which is activated by self-cleavage at a specific serine bond to produce a beta-subunit with a hydroxyl group at its C-terminus and an alpha-subunit with a pyruvoyl group at its N-terminus.

Its subcellular location is the cytoplasm. It carries out the reaction L-aspartate + H(+) = beta-alanine + CO2. The protein operates within cofactor biosynthesis; (R)-pantothenate biosynthesis; beta-alanine from L-aspartate: step 1/1. Functionally, catalyzes the pyruvoyl-dependent decarboxylation of aspartate to produce beta-alanine. The sequence is that of Aspartate 1-decarboxylase from Staphylococcus aureus (strain JH1).